Consider the following 201-residue polypeptide: Flagellin B1 (201 aa).

Positions 1–11 are excised as a propeptide; sequence MFEQNDDRDRG.

It belongs to the archaeal flagellin family.

The protein resides in the archaeal flagellum. Its function is as follows. Flagellin is the subunit protein which polymerizes to form the filaments of archaeal flagella. The polypeptide is Flagellin B1 (flaB1) (Natrialba magadii (strain ATCC 43099 / DSM 3394 / CCM 3739 / CIP 104546 / IAM 13178 / JCM 8861 / NBRC 102185 / NCIMB 2190 / MS3) (Natronobacterium magadii)).